The chain runs to 73 residues: Translation initiation factor IF-1 (73 aa).

Residues 1–73 (MPKKDGAIEI…TRGRIVYRYK (73 aa)) form the S1-like domain.

The protein belongs to the IF-1 family. As to quaternary structure, component of the 30S ribosomal translation pre-initiation complex which assembles on the 30S ribosome in the order IF-2 and IF-3, IF-1 and N-formylmethionyl-tRNA(fMet); mRNA recruitment can occur at any time during PIC assembly.

It is found in the cytoplasm. Its function is as follows. One of the essential components for the initiation of protein synthesis. Stabilizes the binding of IF-2 and IF-3 on the 30S subunit to which N-formylmethionyl-tRNA(fMet) subsequently binds. Helps modulate mRNA selection, yielding the 30S pre-initiation complex (PIC). Upon addition of the 50S ribosomal subunit IF-1, IF-2 and IF-3 are released leaving the mature 70S translation initiation complex. This Salinispora arenicola (strain CNS-205) protein is Translation initiation factor IF-1.